Here is a 303-residue protein sequence, read N- to C-terminus: Inner kinetochore subunit mal2 (303 aa).

The protein belongs to the CENP-O/MCM21 family. As to quaternary structure, component of the heterotetrameric kinetochore subcomplex COMA, which consists of fta2, fta7, mal2 and mis17. The COMA subcomplex is part of a larger constitutive centromere-associated network (CCAN) (also known as central kinetochore Sim4 complex in fission yeast), which is composed of at least cnl2, cnp3, cnp20, fta1, fta2, fta3, fta4, fta6, fta7, mal2, mhf1, mhf2, mis6, mis15, mis17, sim4 and wip1.

Its subcellular location is the nucleus. It localises to the chromosome. It is found in the centromere. The protein resides in the kinetochore. Functionally, component of the kinetochore, a multiprotein complex that assembles on centromeric DNA and attaches chromosomes to spindle microtubules, mediating chromosome segregation and sister chromatid segregation during meiosis and mitosis. Component of the inner kinetochore COMA complex, which connects centromere-associated proteins and the outer kinetochore. COMA interacts with other inner kinetochore proteins to form the inner kinetochore constitutive centromere-associated network (CCAN), which serves as a structural platform for outer kinetochore assembly. In Schizosaccharomyces pombe (strain 972 / ATCC 24843) (Fission yeast), this protein is Inner kinetochore subunit mal2 (mal2).